The following is a 417-amino-acid chain: Serine hydroxymethyltransferase 1 (417 aa).

Residues Leu-121 and 125 to 127 (GHL) contribute to the (6S)-5,6,7,8-tetrahydrofolate site. Position 229 is an N6-(pyridoxal phosphate)lysine (Lys-229). (6S)-5,6,7,8-tetrahydrofolate is bound at residue 354-356 (SPF).

It belongs to the SHMT family. As to quaternary structure, homodimer. Pyridoxal 5'-phosphate is required as a cofactor.

It is found in the cytoplasm. It carries out the reaction (6R)-5,10-methylene-5,6,7,8-tetrahydrofolate + glycine + H2O = (6S)-5,6,7,8-tetrahydrofolate + L-serine. It participates in one-carbon metabolism; tetrahydrofolate interconversion. It functions in the pathway amino-acid biosynthesis; glycine biosynthesis; glycine from L-serine: step 1/1. Functionally, catalyzes the reversible interconversion of serine and glycine with tetrahydrofolate (THF) serving as the one-carbon carrier. This reaction serves as the major source of one-carbon groups required for the biosynthesis of purines, thymidylate, methionine, and other important biomolecules. Also exhibits THF-independent aldolase activity toward beta-hydroxyamino acids, producing glycine and aldehydes, via a retro-aldol mechanism. The sequence is that of Serine hydroxymethyltransferase 1 from Pseudomonas syringae pv. syringae (strain B728a).